We begin with the raw amino-acid sequence, 484 residues long: Cobyric acid synthase (484 aa).

In terms of domain architecture, GATase cobBQ-type spans 251 to 438 (ALKVAVPVLS…LHGLFGSDAY (188 aa)). Residue Cys333 is the Nucleophile of the active site. His430 is a catalytic residue.

This sequence belongs to the CobB/CobQ family. CobQ subfamily.

Its pathway is cofactor biosynthesis; adenosylcobalamin biosynthesis. Catalyzes amidations at positions B, D, E, and G on adenosylcobyrinic A,C-diamide. NH(2) groups are provided by glutamine, and one molecule of ATP is hydrogenolyzed for each amidation. In Sinorhizobium fredii (strain NBRC 101917 / NGR234), this protein is Cobyric acid synthase.